A 558-amino-acid polypeptide reads, in one-letter code: Chaperonin GroEL 1 (558 aa).

ATP-binding positions include 29–32 (TLGP), 86–90 (DGTTT), Gly-413, and Asp-494.

It belongs to the chaperonin (HSP60) family. As to quaternary structure, forms a cylinder of 14 subunits composed of two heptameric rings stacked back-to-back. Interacts with the co-chaperonin GroES.

The protein resides in the cytoplasm. The enzyme catalyses ATP + H2O + a folded polypeptide = ADP + phosphate + an unfolded polypeptide.. Together with its co-chaperonin GroES, plays an essential role in assisting protein folding. The GroEL-GroES system forms a nano-cage that allows encapsulation of the non-native substrate proteins and provides a physical environment optimized to promote and accelerate protein folding. The chain is Chaperonin GroEL 1 from Acaryochloris marina (strain MBIC 11017).